Consider the following 473-residue polypeptide: 3-isopropylmalate dehydratase large subunit (473 aa).

[4Fe-4S] cluster is bound by residues cysteine 354, cysteine 414, and cysteine 417.

Belongs to the aconitase/IPM isomerase family. LeuC type 1 subfamily. As to quaternary structure, heterodimer of LeuC and LeuD. The cofactor is [4Fe-4S] cluster.

It carries out the reaction (2R,3S)-3-isopropylmalate = (2S)-2-isopropylmalate. It participates in amino-acid biosynthesis; L-leucine biosynthesis; L-leucine from 3-methyl-2-oxobutanoate: step 2/4. In terms of biological role, catalyzes the isomerization between 2-isopropylmalate and 3-isopropylmalate, via the formation of 2-isopropylmaleate. The polypeptide is 3-isopropylmalate dehydratase large subunit (Mycobacterium ulcerans (strain Agy99)).